We begin with the raw amino-acid sequence, 642 residues long: Threonine--tRNA ligase (642 aa).

One can recognise a TGS domain in the interval 1–61 (MPVITLPDGS…ETDAELSIIT (61 aa)). Residues 243 to 534 (DHRKIGKQLD…LIEEYAGRFP (292 aa)) are catalytic. Zn(2+) is bound by residues C334, H385, and H511.

Belongs to the class-II aminoacyl-tRNA synthetase family. Homodimer. The cofactor is Zn(2+).

The protein resides in the cytoplasm. It catalyses the reaction tRNA(Thr) + L-threonine + ATP = L-threonyl-tRNA(Thr) + AMP + diphosphate + H(+). Functionally, catalyzes the attachment of threonine to tRNA(Thr) in a two-step reaction: L-threonine is first activated by ATP to form Thr-AMP and then transferred to the acceptor end of tRNA(Thr). Also edits incorrectly charged L-seryl-tRNA(Thr). This is Threonine--tRNA ligase from Shewanella sp. (strain MR-7).